Here is a 349-residue protein sequence, read N- to C-terminus: Magnesium-protoporphyrin IX monomethyl ester [oxidative] cyclase (349 aa).

The protein belongs to the AcsF family. Requires Fe cation as cofactor.

The protein resides in the plastid. The protein localises to the chloroplast. It catalyses the reaction Mg-protoporphyrin IX 13-monomethyl ester + 3 NADPH + 3 O2 + 2 H(+) = 3,8-divinyl protochlorophyllide a + 3 NADP(+) + 5 H2O. Its pathway is porphyrin-containing compound metabolism; chlorophyll biosynthesis (light-independent). Catalyzes the formation of the isocyclic ring in chlorophyll biosynthesis. Mediates the cyclase reaction, which results in the formation of divinylprotochlorophyllide (Pchlide) characteristic of all chlorophylls from magnesium-protoporphyrin IX 13-monomethyl ester (MgPMME). The polypeptide is Magnesium-protoporphyrin IX monomethyl ester [oxidative] cyclase (Porphyra purpurea (Red seaweed)).